A 558-amino-acid polypeptide reads, in one-letter code: Inositol-3-phosphate synthase 1 (558 aa).

Gly-67, Gly-68, Asn-69, Asn-70, Asp-141, Ser-177, Val-178, Gln-188, Arg-191, Thr-228, Ala-229, Asn-230, Thr-231, Gly-278, Ser-279, Asp-303, Ser-306, Asn-337, Asn-338, Asp-339, and Lys-352 together coordinate NAD(+). Position 279 is a phosphoserine (Ser-279). A Phosphoserine modification is found at Ser-357. Residues Gly-390, Asp-391, Asp-419, and Ser-420 each contribute to the NAD(+) site. Residues 537-558 are disordered; the sequence is ATNGCTGDANGHLQEEPPMPTT.

It belongs to the myo-inositol 1-phosphate synthase family. NAD(+) is required as a cofactor. Post-translationally, phosphorylation at Ser-279 and Ser-357 may be associated with a decrease in activity. In terms of tissue distribution, highly expressed in testis, ovary, heart, placenta and pancreas. Weakly expressed in blood leukocyte, thymus, skeletal muscle and colon.

The protein localises to the cytoplasm. The enzyme catalyses D-glucose 6-phosphate = 1D-myo-inositol 3-phosphate. Its pathway is polyol metabolism; myo-inositol biosynthesis; myo-inositol from D-glucose 6-phosphate: step 1/2. With respect to regulation, inhibited by mood-stabilizing drugs such as valproate (VPA) and lithium. Functionally, key enzyme in myo-inositol biosynthesis pathway that catalyzes the conversion of glucose 6-phosphate to 1-myo-inositol 1-phosphate in a NAD-dependent manner. Rate-limiting enzyme in the synthesis of all inositol-containing compounds. The polypeptide is Inositol-3-phosphate synthase 1 (ISYNA1) (Homo sapiens (Human)).